We begin with the raw amino-acid sequence, 124 residues long: MSERALRGTRLVVTSYETDRGIDLAPRQAVEYACEKGHRFEMPFSVEAEIPPEWECKVCGAQALLVDGDGPEEKKAKPARTHWDMLMERRTREELEEVLEERLAVLRSGAMNIAVHPRDSRKSA.

4 residues coordinate Zn(2+): cysteine 34, histidine 38, cysteine 56, and cysteine 59. The interval 73 to 124 (EKKAKPARTHWDMLMERRTREELEEVLEERLAVLRSGAMNIAVHPRDSRKSA) is sufficient for interaction with HrdB (SigA).

It belongs to the RNA polymerase-binding protein RbpA family. Homodimer. Forms a complex with the RNAP, and a complex with RNAP plus principal sigma factor HrdB associated with promoter. Binds to free principal sigma factors HrdB and HrdA, probably via the sigma-2 domain, but not to 6 other sigma factors tested. Zn(2+) is required as a cofactor.

Its function is as follows. Binds to RNA polymerase (RNAP), stimulating transcription from principal, but not alternative sigma factor promoters. Stimulates transcription from several principal sigma factor HrdB (SigA)-dependent promoters but not from a SigR-dependent promoter. Stimulation occurs in the presence of the transcription initiation inhibitor rifampicin (Rif). The sequence is that of RNA polymerase-binding protein RbpA from Streptomyces coelicolor (strain ATCC BAA-471 / A3(2) / M145).